The chain runs to 23 residues: Cysteine-rich venom protein 24 (23 aa).

Residues 1-23 (VDFASESXNKRENQQIVDKHNAL) are disordered. Residues 8–23 (XNKRENQQIVDKHNAL) are compositionally biased toward basic and acidic residues.

Belongs to the CRISP family. Post-translationally, contains 8 disulfide bonds. In terms of tissue distribution, expressed by the venom gland.

The protein localises to the secreted. The sequence is that of Cysteine-rich venom protein 24 from Naja kaouthia (Monocled cobra).